A 450-amino-acid chain; its full sequence is Phosphoglucosamine mutase (450 aa).

Ser-103 functions as the Phosphoserine intermediate in the catalytic mechanism. Positions 103, 243, 245, and 247 each coordinate Mg(2+). At Ser-103 the chain carries Phosphoserine.

Belongs to the phosphohexose mutase family. Mg(2+) is required as a cofactor. Activated by phosphorylation.

It catalyses the reaction alpha-D-glucosamine 1-phosphate = D-glucosamine 6-phosphate. Its function is as follows. Catalyzes the conversion of glucosamine-6-phosphate to glucosamine-1-phosphate. The sequence is that of Phosphoglucosamine mutase from Lactobacillus delbrueckii subsp. bulgaricus (strain ATCC BAA-365 / Lb-18).